The sequence spans 477 residues: MKVNLPAFERAGVMVVGDVMLDRYWYGPTCRISPEAPVPVVKVNTVEERPGGAANVAMNIASLGANARLVGLTGIDDAARALSKTLAEVNVKCDFVSVPTHPTITKLRVLSRNQQLIRLDFEEGFEGVDPQPLHERINQALGSIGALVLSDYAKGALTSVQTMISLARQAGVPVLIDPKGTDFERYRGATLLTPNLSEFEAVAGKCKSEDELVERGMKLIADYDLSALLVTRSEQGMTLLQPNKAPLHMPTQAQEVYDVTGAGDTVIGVLAATLAAGNTLEEACYFANAAAGVVVGKLGTSTVSPIELENAVRGRADTGFGVMTEEELRQAVASARKRGEKVVMTNGVFDILHAGHVSYLANARKLGDRLIVAVNSDASTKRLKGESRPVNPLEQRMIVLGALESVDWVVSFEEDTPQRLIAGILPDLLVKGGDYKPEEIAGSEEVWANGGEVMVLNFEDGCSTTNIIKKIQTESEK.

Residues 1–318 form a ribokinase region; it reads MKVNLPAFER…ENAVRGRADT (318 aa). 195 to 198 contributes to the ATP binding site; the sequence is NLSE. Residue aspartate 264 is part of the active site. The cytidylyltransferase stretch occupies residues 344 to 477; sequence MTNGVFDILH…IKKIQTESEK (134 aa).

This sequence in the N-terminal section; belongs to the carbohydrate kinase PfkB family. In the C-terminal section; belongs to the cytidylyltransferase family. Homodimer.

The catalysed reaction is D-glycero-beta-D-manno-heptose 7-phosphate + ATP = D-glycero-beta-D-manno-heptose 1,7-bisphosphate + ADP + H(+). It carries out the reaction D-glycero-beta-D-manno-heptose 1-phosphate + ATP + H(+) = ADP-D-glycero-beta-D-manno-heptose + diphosphate. It functions in the pathway nucleotide-sugar biosynthesis; ADP-L-glycero-beta-D-manno-heptose biosynthesis; ADP-L-glycero-beta-D-manno-heptose from D-glycero-beta-D-manno-heptose 7-phosphate: step 1/4. Its pathway is nucleotide-sugar biosynthesis; ADP-L-glycero-beta-D-manno-heptose biosynthesis; ADP-L-glycero-beta-D-manno-heptose from D-glycero-beta-D-manno-heptose 7-phosphate: step 3/4. Catalyzes the phosphorylation of D-glycero-D-manno-heptose 7-phosphate at the C-1 position to selectively form D-glycero-beta-D-manno-heptose-1,7-bisphosphate. In terms of biological role, catalyzes the ADP transfer from ATP to D-glycero-beta-D-manno-heptose 1-phosphate, yielding ADP-D-glycero-beta-D-manno-heptose. This chain is Bifunctional protein HldE, found in Salmonella agona (strain SL483).